The sequence spans 1529 residues: Protein STU1 (1529 aa).

Disordered regions lie at residues serine 266 to isoleucine 314, lysine 617 to alanine 638, lysine 651 to isoleucine 745, and serine 1070 to isoleucine 1090. The segment covering threonine 273–serine 290 has biased composition (low complexity). 2 stretches are compositionally biased toward polar residues: residues arginine 295–serine 308 and arginine 619–threonine 634. The span at threonine 660–serine 674 shows a compositional bias: low complexity. Positions threonine 708–alanine 723 are enriched in polar residues.

Belongs to the CLASP family. In terms of assembly, interacts with microtubules.

The protein resides in the cytoplasm. It is found in the cytoskeleton. Its subcellular location is the nucleus. The protein localises to the spindle. In terms of biological role, microtubule binding protein that promotes the stabilization of dynamic microtubules. Required for mitotic spindle formation. The chain is Protein STU1 (STU1) from Debaryomyces hansenii (strain ATCC 36239 / CBS 767 / BCRC 21394 / JCM 1990 / NBRC 0083 / IGC 2968) (Yeast).